Here is an 864-residue protein sequence, read N- to C-terminus: Dynamin-1 (864 aa).

Residues 28 to 294 (DLDLPQIAVV…LTNHIRDTLP (267 aa)) enclose the Dynamin-type G domain. Residues 38–45 (GGQSAGKS) are G1 motif. 7 residues coordinate GDP: Ser41, Gly43, Lys44, Ser45, Ser46, Arg59, and Gly60. The interval 64 to 66 (VTR) is G2 motif. Tyr80 carries the post-translational modification Phosphotyrosine. Tyr125 bears the 3'-nitrotyrosine; alternate mark. The residue at position 125 (Tyr125) is a Phosphotyrosine; alternate. A G3 motif region spans residues 136–139 (DLPG). The G4 motif stretch occupies residues 205–208 (TKLD). Positions 206, 208, 211, 236, 237, and 239 each coordinate GDP. A G5 motif region spans residues 235–238 (VNRS). Phosphoserine occurs at positions 306 and 347. Tyr354 is modified (phosphotyrosine). At Ser512 the chain carries Phosphoserine. Residues 519 to 625 (LVIRKGWLTI…WKASFLRAGV (107 aa)) enclose the PH domain. The GED domain occupies 659–750 (VETIRNLVDS…IIGDINTTTV (92 aa)). The interval 767-864 (SVPAGRRSPT…PESPRPPFDL (98 aa)) is disordered. Ser774 carries the post-translational modification Phosphoserine; by GSK3-beta. A Phosphoserine modification is found at Ser778. Arg796 carries the post-translational modification Omega-N-methylarginine. Position 822 is a phosphoserine (Ser822). Over residues 825–843 (PFGPPPQVPSRPNRAPPGV) the composition is skewed to pro residues. A phosphoserine mark is found at Ser851 and Ser857.

The protein belongs to the TRAFAC class dynamin-like GTPase superfamily. Dynamin/Fzo/YdjA family. In terms of assembly, homodimer; homodimerization is mediated by the dynamin-type G domain which promotes assembly-stimulated GTPase activity. Homo-tetramer formed from two dimers in the absence of lipid. Oligomerizes into a helical polymer that self-assembles around the vesicle membrane, when associated to the menbrane through lipid binding. Interacts (via C-terminal proline-rich domain (PRD)) with SNX9 (via SH3 domain); this interaction allows regulation of DNM1 self-assembly during late stages of endocytic vesicle formation and supports DNM1's early functions in accelerating clathrin-coated pits (CCPs) maturation in non neuronals cell. Interacts (via C-terminal proline-rich domain (PRD)) with MYO1E (via SH3 domain); this interaction regulates receptor-mediated endocytosis. Interacts with SNX33 (via SH3 domain); this interaction decreases DNM1-dependent endocytosis. Interacts with DIAPH1. Interacts with GRB2 (via SH3 domain); this interaction mediates disassembly of DNM1 polymers, therefore modulates self-assembly. Forms a complex with BIN1 (via SH3 domain) and SH3GL2 (via SH3 domain). Forms a complex with SH3GL2 (via SH3 domain) and AMPH (via SH3 domain). Forms a complex with SH3GL2 (via SH3 domain) and SYNJ1. Interacts with AMPH. Interacts (via C-terminal proline-rich domain (PRD)) with SYT1; this interaction facilitates vesicle fission during clathrin-mediated endocytosis (CME). Interacts (via C-terminal proline-rich domain (PRD)) with PLCG1 (via SH3 domain); this interaction stimulates the release of GDP from DNM1 and enhances DNM1-dependent endocytosis. Interacts with SNPH; this interaction inhibits the binding of DNM1 to AMPH and DNM1-receptor-mediated endocytosis. Interacts with CAV1. Interacts with SH3GLB1 (via SH3 domain). Interacts with PACSIN1 (via SH3 domain), PACSIN2 (via SH3 domain) and PACSIN3 (via SH3 domain). Interacts with UNC119; this interaction decreases DNM1's GTPase activity and affects DNM1's interaction with AMPH. Interacts (GTP-bound form) with DNAJC6; this interaction allows clathrin-coated vesicle (CCV) formation at the plasma membrane. Phosphorylation at Ser-774 by GSK3B/GSK3-beta leads to inactivation of receptor-mediated endocytosis in non-neuronal cells. Dephosphorylation at Ser-774, through the EGFR downstream signaling, leads to activation and regulates early stages of clathrin-mediated endocytosis (CME). Phosphorylated by CDK5 leading to synaptic vesicle endocytosis (SVE) activation.

The protein localises to the cell membrane. The protein resides in the membrane. It localises to the clathrin-coated pit. It is found in the cytoplasmic vesicle. Its subcellular location is the presynapse. The protein localises to the secretory vesicle. The protein resides in the chromaffin granule. It carries out the reaction GTP + H2O = GDP + phosphate + H(+). With respect to regulation, GTPase activity is activated by 1-phosphatidyl-1D-myo-inositol 4,5-bisphosphate. GTPase activity is inhibited by the heterodimer G protein formed by GNB1 and GNG2 with an IC(50)=400 nM when DNM1 concentration is 5 nM. In terms of biological role, catalyzes the hydrolysis of GTP and utilizes this energy to mediate vesicle scission and participates in many forms of endocytosis, such as clathrin-mediated endocytosis or synaptic vesicle endocytosis as well as rapid endocytosis (RE). Associates to the membrane, through lipid binding, and self-assembles into rings and stacks of interconnected rings through oligomerization to form a helical polymer around the vesicle membrane leading to constriction of invaginated coated pits around their necks. Self-assembly of the helical polymer induces membrane tubules narrowing until the polymer reaches a length sufficient to trigger GTP hydrolysis. Depending on the curvature imposed on the tubules, membrane detachment from the helical polymer upon GTP hydrolysis can cause spontaneous hemifission followed by complete fission. May play a role in regulating early stages of clathrin-mediated endocytosis in non-neuronal cells through its activation by dephosphorylation via the signaling downstream of EGFR. Controls vesicle size at a step before fission, during formation of membrane pits, at hippocampal synapses. Controls plastic adaptation of the synaptic vesicle recycling machinery to high levels of activity. Mediates rapid endocytosis (RE), a Ca(2+)-dependent and clathrin- and K(+)-independent process in chromaffin cells. Microtubule-associated force-producing protein involved in producing microtubule bundles and able to bind and hydrolyze GTP. Through its interaction with DNAJC6, acts during the early steps of clathrin-coated vesicle (CCV) formation. The chain is Dynamin-1 from Homo sapiens (Human).